Reading from the N-terminus, the 695-residue chain is Protein MALE DISCOVERER 1 (695 aa).

The signal sequence occupies residues 1 to 29 (MGCRWNPIGFQFSCFMFLIITLQSRSSLS). Residues 30 to 340 (LESEGFVLLK…SKGFKDVWLY (311 aa)) are Extracellular-facing. N-linked (GlcNAc...) asparagine glycans are attached at residues Asn-56 and Asn-80. 4 LRR repeats span residues 75 to 98 (KVQM…SQLS), 99 to 121 (ELRS…FASF), 123 to 144 (KLEF…ELNK), and 147 to 168 (TPEN…KFLR). Residue Asn-247 is glycosylated (N-linked (GlcNAc...) asparagine). The disordered stretch occupies residues 302 to 325 (PPLIPPSSPPPLPTNNTIASDPPR). The span at 303–314 (PLIPPSSPPPLP) shows a compositional bias: pro residues. An N-linked (GlcNAc...) asparagine glycan is attached at Asn-316. The helical transmembrane segment at 341–361 (VVIGVAAFVAMLIIVAVIFFF) threads the bilayer. Over 362–695 (RKRAVKSIGP…ELEILSSEAT (334 aa)) the chain is Cytoplasmic. The region spanning 363 to 668 (KRAVKSIGPW…YVVQQLKEVI (306 aa)) is the Protein kinase domain. Ser-652 is subject to Phosphoserine.

The protein belongs to the protein kinase superfamily. Ser/Thr protein kinase family. In terms of assembly, homodimer. Interacts with MIK1, MIK2 and LURE1.2. LURE1.2 enhances the heterodimerization of MDIS1 with MIK1 or MIK2. Post-translationally, phosphorylated by MIK1. As to expression, expressed in pollen tubes and seedlings.

The protein localises to the cell membrane. The protein resides in the endomembrane system. The catalysed reaction is L-seryl-[protein] + ATP = O-phospho-L-seryl-[protein] + ADP + H(+). It catalyses the reaction L-threonyl-[protein] + ATP = O-phospho-L-threonyl-[protein] + ADP + H(+). Functionally, involved in the pollen tube perception of the female signal. The polypeptide is Protein MALE DISCOVERER 1 (Arabidopsis thaliana (Mouse-ear cress)).